The primary structure comprises 252 residues: Imidazole glycerol phosphate synthase subunit HisF (252 aa).

Catalysis depends on residues Asp-11 and Asp-130.

The protein belongs to the HisA/HisF family. In terms of assembly, heterodimer of HisH and HisF.

It localises to the cytoplasm. It carries out the reaction 5-[(5-phospho-1-deoxy-D-ribulos-1-ylimino)methylamino]-1-(5-phospho-beta-D-ribosyl)imidazole-4-carboxamide + L-glutamine = D-erythro-1-(imidazol-4-yl)glycerol 3-phosphate + 5-amino-1-(5-phospho-beta-D-ribosyl)imidazole-4-carboxamide + L-glutamate + H(+). Its pathway is amino-acid biosynthesis; L-histidine biosynthesis; L-histidine from 5-phospho-alpha-D-ribose 1-diphosphate: step 5/9. IGPS catalyzes the conversion of PRFAR and glutamine to IGP, AICAR and glutamate. The HisF subunit catalyzes the cyclization activity that produces IGP and AICAR from PRFAR using the ammonia provided by the HisH subunit. The protein is Imidazole glycerol phosphate synthase subunit HisF of Dictyoglomus thermophilum (strain ATCC 35947 / DSM 3960 / H-6-12).